Here is a 276-residue protein sequence, read N- to C-terminus: UPF0276 protein AM1_3026 (276 aa).

Belongs to the UPF0276 family.

In Acaryochloris marina (strain MBIC 11017), this protein is UPF0276 protein AM1_3026.